We begin with the raw amino-acid sequence, 310 residues long: Ribosomal RNA large subunit methyltransferase F (310 aa).

The protein belongs to the methyltransferase superfamily. METTL16/RlmF family.

The protein localises to the cytoplasm. The enzyme catalyses adenosine(1618) in 23S rRNA + S-adenosyl-L-methionine = N(6)-methyladenosine(1618) in 23S rRNA + S-adenosyl-L-homocysteine + H(+). Specifically methylates the adenine in position 1618 of 23S rRNA. This is Ribosomal RNA large subunit methyltransferase F from Psychromonas ingrahamii (strain DSM 17664 / CCUG 51855 / 37).